Here is a 297-residue protein sequence, read N- to C-terminus: MNQASLYQHANQVQRHDAKLILDEFASTMQWRSDGEDALLDVGSGSGNVLMDFVKPLLPIRGQLVGTDISSQMVHYASKHYQREERTRFQVLDIGCERLPEELSGRFDHVTSFYCLHWVQNLKGALGNIYNLLKPEGGDCLLAFLASNPVYEVYKILKTNDKWSTFMQDVENFISPLHYSLSPGEEFSQLLNDVGFVQHNVEIRNEVFVYEGVRTLKDNVKAICPFLERMPADLHEQFLDDFIDIVISMNLQQGENNEDQKFLSPYKLVVAYARKTPEFVNNVFLEPTHQNLVKGIN.

The protein belongs to the methyltransferase superfamily. As to expression, predominantly expressed in corpora allata. Also expressed at low level in testis.

The enzyme catalyses (2E,6E)-farnesoate + S-adenosyl-L-methionine = methyl (2E,6E)-farnesoate + S-adenosyl-L-homocysteine. It carries out the reaction juvenile hormone III carboxylate + S-adenosyl-L-methionine = juvenile hormone III + S-adenosyl-L-homocysteine. Functionally, O-methyltransferase that transfers a methyl group from S-adenosyl-L-methionine (SAM) to the carboxyl group of juvenile hormone acids to produce active juvenile hormones in the corpora allata, the last step during juvenile hormone biosynthesis. Also able to methylate farnesoate to methyl farnesoate. The chain is Juvenile hormone acid O-methyltransferase from Drosophila melanogaster (Fruit fly).